Here is a 193-residue protein sequence, read N- to C-terminus: Cysteine and glycine-rich protein 1 (193 aa).

Residues 10–61 (CGVCQKTVYFAEEVQCEGNSFHKSCFLCMVCKKNLDSTTVAVHGEEIYCKSC) form the LIM zinc-binding 1 domain. A Nuclear localization signal motif is present at residues 64 to 69 (KKYGPK). S81 carries the post-translational modification Phosphoserine. Residue K84 is modified to N6-acetyllysine. Residue K91 forms a Glycyl lysine isopeptide (Lys-Gly) (interchain with G-Cter in SUMO2) linkage. An N6-acetyllysine mark is found at K112, K131, K137, and K161. The region spanning 119 to 170 (CPRCSQAVYAAEKVIGAGKSWHKACFRCAKCGKGLESTTLADKDGEIYCKGC) is the LIM zinc-binding 2 domain. S192 carries the post-translational modification Phosphoserine.

In terms of assembly, interacts with ASCC1; ASCC2 and TRIP4.

The protein resides in the nucleus. Functionally, could play a role in neuronal development. This Pongo abelii (Sumatran orangutan) protein is Cysteine and glycine-rich protein 1 (CSRP1).